A 314-amino-acid polypeptide reads, in one-letter code: Nucleotide-binding protein CE1710 (314 aa).

Positions 1-29 (MNQTPGSTVPETATPVTSPASSPSAPETT) are disordered. The segment covering 7–29 (STVPETATPVTSPASSPSAPETT) has biased composition (low complexity). Position 37–44 (37–44 (GMSGAGLS)) interacts with ATP. 88-91 (DVRS) lines the GTP pocket.

Belongs to the RapZ-like family.

Functionally, displays ATPase and GTPase activities. This chain is Nucleotide-binding protein CE1710, found in Corynebacterium efficiens (strain DSM 44549 / YS-314 / AJ 12310 / JCM 11189 / NBRC 100395).